A 92-amino-acid chain; its full sequence is Small ribosomal subunit protein uS19c (92 aa).

This sequence belongs to the universal ribosomal protein uS19 family.

It localises to the plastid. The protein localises to the chloroplast. Functionally, protein S19 forms a complex with S13 that binds strongly to the 16S ribosomal RNA. The chain is Small ribosomal subunit protein uS19c from Angiopteris evecta (Mule's foot fern).